Consider the following 94-residue polypeptide: Co-chaperonin GroES (94 aa).

The protein belongs to the GroES chaperonin family. Heptamer of 7 subunits arranged in a ring. Interacts with the chaperonin GroEL.

It localises to the cytoplasm. Together with the chaperonin GroEL, plays an essential role in assisting protein folding. The GroEL-GroES system forms a nano-cage that allows encapsulation of the non-native substrate proteins and provides a physical environment optimized to promote and accelerate protein folding. GroES binds to the apical surface of the GroEL ring, thereby capping the opening of the GroEL channel. The polypeptide is Co-chaperonin GroES (Leuconostoc citreum (strain KM20)).